A 427-amino-acid chain; its full sequence is MAATDVERVSNEEKRSLAMTGHVGFDSLPDQLVSKSVTQGFCFNILCVGETGIGKSTLMNTLFNTTFETEEASHYENGVRLRPRTYDLQESNVHLKLTIVDTVGFGDQINKDDSYRSVVDYIDTQFENYLQEELKIRRSLFNYHDSRIHVCLYFITPTGHSLKSLDLVTMKKLDSKVNIIPIIAKADTISKSELHKFKIKIMSELVSNGVQIYQFPTDDDAVAEINSVMNAHLPFAVVGSTEEVKVGNKLVRARQYPWGVVQVENESHCDFVKLREMLIRVNMEDLREQTHTRHYELYRRCKLEEMGFKDNDPDTQPFSLQETYEAKRKEFLGELQRKEEEMRQMFVNKVKETEAELKDKERELQEKFMQLKRVHQEESKKVEDKRRDLEEEMNSFNRRKAAMEALQSQSFQATSQQPLKKDKDRKN.

Positions 39 to 305 constitute a Septin-type G domain; that stretch reads QGFCFNILCV…ELYRRCKLEE (267 aa). The G1 motif stretch occupies residues 49-56; it reads GETGIGKS. Residues 49–56, Gly104, 185–193, Gly239, and Arg254 contribute to the GTP site; these read GETGIGKS and KADTISKSE. Residues 101–104 form a G3 motif region; it reads DTVG. The interval 184 to 187 is G4 motif; the sequence is AKAD. Residues 321 to 409 are a coiled coil; it reads QETYEAKRKE…KAAMEALQSQ (89 aa). Positions 373–427 are disordered; it reads RVHQEESKKVEDKRRDLEEEMNSFNRRKAAMEALQSQSFQATSQQPLKKDKDRKN. Residues 374 to 389 are compositionally biased toward basic and acidic residues; sequence VHQEESKKVEDKRRDL. Residues 406-418 are compositionally biased toward polar residues; sequence LQSQSFQATSQQP.

This sequence belongs to the TRAFAC class TrmE-Era-EngA-EngB-Septin-like GTPase superfamily. Septin GTPase family.

Its subcellular location is the cytoplasm. It localises to the cytoskeleton. It is found in the synapse. The protein localises to the cell projection. The protein resides in the axon. Its subcellular location is the cytoplasmic vesicle. It localises to the secretory vesicle. It is found in the synaptic vesicle membrane. The protein localises to the presynapse. The protein is Septin-8 of Xenopus tropicalis (Western clawed frog).